We begin with the raw amino-acid sequence, 340 residues long: tRNA N6-adenosine threonylcarbamoyltransferase (340 aa).

2 residues coordinate Fe cation: His115 and His119. Substrate contacts are provided by residues 138-142 (VVSGG), Asp171, Gly184, Asp188, and Asn278. Asp306 is a binding site for Fe cation.

It belongs to the KAE1 / TsaD family. Requires Fe(2+) as cofactor.

The protein resides in the cytoplasm. The catalysed reaction is L-threonylcarbamoyladenylate + adenosine(37) in tRNA = N(6)-L-threonylcarbamoyladenosine(37) in tRNA + AMP + H(+). Functionally, required for the formation of a threonylcarbamoyl group on adenosine at position 37 (t(6)A37) in tRNAs that read codons beginning with adenine. Is involved in the transfer of the threonylcarbamoyl moiety of threonylcarbamoyl-AMP (TC-AMP) to the N6 group of A37, together with TsaE and TsaB. TsaD likely plays a direct catalytic role in this reaction. In Clostridium botulinum (strain 657 / Type Ba4), this protein is tRNA N6-adenosine threonylcarbamoyltransferase.